Reading from the N-terminus, the 179-residue chain is tRNA (cytidine(56)-2'-O)-methyltransferase (179 aa).

Residues Leu-82, Gly-110 to Val-114, and Val-128 to Glu-135 contribute to the S-adenosyl-L-methionine site.

This sequence belongs to the aTrm56 family. In terms of assembly, homodimer.

The protein resides in the cytoplasm. The catalysed reaction is cytidine(56) in tRNA + S-adenosyl-L-methionine = 2'-O-methylcytidine(56) in tRNA + S-adenosyl-L-homocysteine + H(+). In terms of biological role, specifically catalyzes the AdoMet-dependent 2'-O-ribose methylation of cytidine at position 56 in tRNAs. The chain is tRNA (cytidine(56)-2'-O)-methyltransferase from Methanocaldococcus jannaschii (strain ATCC 43067 / DSM 2661 / JAL-1 / JCM 10045 / NBRC 100440) (Methanococcus jannaschii).